A 153-amino-acid chain; its full sequence is Arachidonate 5-lipoxygenase-activating protein (153 aa).

Residues Met1–Asn8 lie on the Lumenal side of the membrane. The helical transmembrane segment at Val9–Val30 threads the bilayer. Residues Glu31–Arg52 are Cytoplasmic-facing. The helical transmembrane segment at Val53 to Leu77 threads the bilayer. At Cys78–Gln80 the chain is on the lumenal side. Residues Val81–Leu102 form a helical membrane-spanning segment. Over Gly103–Gln107 the chain is Cytoplasmic. An intramembrane segment occupies Ser108 to Gly115. Residues Lys116–Ala128 form a helical membrane-spanning segment. The Lumenal portion of the chain corresponds to Gly129–Thr153.

This sequence belongs to the MAPEG family. In terms of assembly, homotrimer. Interacts with LTC4S and ALOX5.

Its subcellular location is the nucleus membrane. It localises to the endoplasmic reticulum membrane. Required for leukotriene biosynthesis by ALOX5 (5-lipoxygenase). Anchors ALOX5 to the membrane. Binds arachidonic acid, and could play an essential role in the transfer of arachidonic acid to ALOX5. Binds to MK-886, a compound that blocks the biosynthesis of leukotrienes. The sequence is that of Arachidonate 5-lipoxygenase-activating protein (ALOX5AP) from Oryctolagus cuniculus (Rabbit).